A 1381-amino-acid chain; its full sequence is MKAPTVLAPGILVLLFTLVQKSNGECREALAKSEMNVNMKYQLPNFTAETPIQNVVLHKHHIYLGAVNYIYVLNDKDLQKVAEYKTGPVLEHPDCVPCQNCSSKANLSGSAWRDNINMALLVDTYYDDQLISCGSVNRGTCQRHVFPPHNTADIQSEVRCMYSPQPEEEPSQCPDCVVSALGTKVLLTVKDRFINFFVGNTINSSYLPDHSLHSISVRRLKETQDGFKFLTDQSYIDVLPEFRDSYPIKYVHAFESNHFIYFLTVQRETLDSQTFHTRIIRFCSVDSGLHSYMEMPLECILTEKRRKRSTRQEVFNILQAAYVSKPGAHLAKQIGASPNDDILYGVFAQSKPDSAEPMNRSAVCAFPIKYVNEFFNKIVNKNNVRCLQHFYGPNHEHCFNRTLLRNSSGCEVRSDEYRTEFTTALQRVDLFMGQFNQVLLTSISTFIKGDLTIANLGTSEGRFMQVVVSRSVLPAPHVNFLLDSNPVSLEALVEDPVNQNGYTLVVTGKKITRIPLDGLGCGHFQSCSQCLSAPPFVQCGWCQDKCVQVEECPNGTWTQEICLPTVYEVFPTSAPLEGGTMLTICGWDFGFRRNNKFDLKKTRVLVGNESCTLTLSESTTNTLKCTVGHAMNENFNMSIIISNGRRTVHYNAFSYVDPIITSIFPKYGPKAGGTLLTLTGKYLNSGNSRHISIGGKTCTLKSVSNSILECYTPAQIISTEFPIKLKIDLANREASSFSYREDPIVYEIHPTKSFLSGGSTITGVGKNLNSVSVTRMVINVHEARKNFTVACQHRSNSEIMCCTTPSLQQLNLQLPLKTRAFFVLDGIYSNYFDLIYVHNPVFKPFEKPVMISMGRENVLEIKGNDIDPEAVKGEVLKVGNKSCENIHSRSQAVLCTVPNDLLKLNSVLYIEWKQAVSSYILGKVIVQSDQSFTGVIVGVVAISIILLLLLGLFLWLKKKKQIKDLGSELVRYDARVHTPHLDRLVSARSVSPTTEMVSNESVDYRATFPEDQFPNSSQNGSCRQVQYPLMDLSPILTSGDSDISSPLLQNVVHIDLSALNPELVQEVQHVVIGPSSLIVHFNEVIGRGHFGCVYHGTLLDSDDKKIHCAVKSLNRITDIGEVSQFLTEGIIMKDFSHPNVLSLLGICLRSEGSPLVVLPYMKHGDLRNFIRNETHNPTVKDLIGFGLQVAKGMKYLASKKFVHRDLAARNCMLDEKFTVKVADFGLARDMYDKEYYSVHNKTGAKLPVKWMALESLQTQKFTTKSDVWSFGVLLWELMTRGAPPYPDVNTFDITVYLLQGRRLLQPEYCPDRLYEVMLKCWHPKAEMRPSFSELVSRISAIFSTFIGEHYVHVNATYVNVKCIAPYPSLLSQDDLDGEVDT.

The first 24 residues, 1–24 (MKAPTVLAPGILVLLFTLVQKSNG), serve as a signal peptide directing secretion. Topologically, residues 25 to 933 (ECREALAKSE…VIVQSDQSFT (909 aa)) are extracellular. The Sema domain maps to 27 to 516 (REALAKSEMN…TGKKITRIPL (490 aa)). N45, N100, and N106 each carry an N-linked (GlcNAc...) asparagine glycan. 4 disulfides stabilise this stretch: C95–C101, C98–C160, C133–C141, and C173–C176. N-linked (GlcNAc...) asparagine glycans are attached at residues N203 and N359. Cystine bridges form between C299–C364 and C386–C398. N400 and N406 each carry an N-linked (GlcNAc...) asparagine glycan. Cystine bridges form between C521/C539, C527/C562, C530/C546, and C542/C552. N-linked (GlcNAc...) asparagine glycosylation is present at N554. IPT/TIG domains follow at residues 564-656 (PTVY…FSYV), 658-740 (PIIT…FSYR), and 743-837 (PIVY…LIYV). O-linked (Man) threonine glycosylation is present at T583. N608 and N636 each carry an N-linked (GlcNAc...) asparagine glycan. O-linked (Man) threonine glycosylation is found at T677 and T762. N786 and N880 each carry an N-linked (GlcNAc...) asparagine glycan. A helical transmembrane segment spans residues 934–956 (GVIVGVVAISIILLLLLGLFLWL). At 957–1381 (KKKKQIKDLG…QDDLDGEVDT (425 aa)) the chain is on the cytoplasmic side. S967 is subject to Phosphoserine. T978 is modified (phosphothreonine). Residues S991, S998, and S1001 each carry the phosphoserine modification. Y1004 carries the phosphotyrosine modification. The region spanning 1079-1346 (VHFNEVIGRG…RISAIFSTFI (268 aa)) is the Protein kinase domain. ATP contacts are provided by residues 1085–1093 (IGRGHFGCV) and K1111. The Proton acceptor role is filled by D1205. Positions 1213–1381 (LDEKFTVKVA…QDDLDGEVDT (169 aa)) are interaction with RANBP9. Y1231 is subject to Phosphotyrosine. Residues Y1235 and Y1236 each carry the phosphotyrosine; by autocatalysis modification. Position 1290 is a phosphothreonine (T1290). Positions 1321-1360 (WHPKAEMRPSFSELVSRISAIFSTFIGEHYVHVNATYVNV) are interaction with MUC20. Phosphotyrosine; by autocatalysis occurs at positions 1350 and 1357. Y1366 bears the Phosphotyrosine mark.

The protein belongs to the protein kinase superfamily. Tyr protein kinase family. As to quaternary structure, heterodimer made of an alpha chain (50 kDa) and a beta chain (145 kDa) which are disulfide linked. Binds PLXNB1. Interacts when phosphorylated with downstream effectors including STAT3, PIK3R1, SRC, PCLG1, GRB2 and GAB1. Interacts with SPSB1, SPSB2 and SPSB4. Interacts with INPP5D/SHIP1. When phosphorylated at Tyr-1357, interacts with INPPL1/SHIP2. Interacts with RANBP9 and RANBP10, as well as SPSB1, SPSB2, SPSB3 and SPSB4. SPSB1 binding occurs in the presence and in the absence of HGF, however HGF treatment has a positive effect on this interaction. Interacts with MUC20; prevents interaction with GRB2 and suppresses hepatocyte growth factor-induced cell proliferation. Interacts with GRB10. Interacts with PTPN1 and PTPN2. Interacts with HSP90AA1 and HSP90AB1; the interaction suppresses MET kinase activity. Interacts with tensin TNS3. Interacts (when phosphorylated) with tensin TNS4 (via SH2 domain); the interaction increases MET protein stability by inhibiting MET endocytosis and subsequent lysosomal degradation. Post-translationally, autophosphorylated in response to ligand binding on Tyr-1235 and Tyr-1236 in the kinase domain leading to further phosphorylation of Tyr-1350 and Tyr-1357 in the C-terminal multifunctional docking site. Dephosphorylated by PTPRJ at Tyr-1350 and Tyr-1366. Dephosphorylated by PTPN1 and PTPN2. Ubiquitinated. Ubiquitination by CBL regulates the receptor stability and activity through proteasomal degradation. In terms of processing, O-mannosylation of IPT/TIG domains by TMEM260 is required for protein maturation. O-mannosylated residues are composed of single mannose glycans that are not elongated or modified.

It is found in the membrane. It carries out the reaction L-tyrosyl-[protein] + ATP = O-phospho-L-tyrosyl-[protein] + ADP + H(+). Its activity is regulated as follows. In its inactive state, the C-terminal tail interacts with the catalytic domain and inhibits the kinase activity. Upon ligand binding, the C-terminal tail is displaced and becomes phosphorylated, thus increasing the kinase activity. In terms of biological role, receptor tyrosine kinase that transduces signals from the extracellular matrix into the cytoplasm by binding to hepatocyte growth factor/HGF ligand. Regulates many physiological processes including proliferation, scattering, morphogenesis and survival. Ligand binding at the cell surface induces autophosphorylation of MET on its intracellular domain that provides docking sites for downstream signaling molecules. Following activation by ligand, interacts with the PI3-kinase subunit PIK3R1, PLCG1, SRC, GRB2, STAT3 or the adapter GAB1. Recruitment of these downstream effectors by MET leads to the activation of several signaling cascades including the RAS-ERK, PI3 kinase-AKT, or PLCgamma-PKC. The RAS-ERK activation is associated with the morphogenetic effects while PI3K/AKT coordinates prosurvival effects. During embryonic development, MET signaling plays a role in gastrulation, development and migration of muscles and neuronal precursors, angiogenesis and kidney formation. In adults, participates in wound healing as well as organ regeneration and tissue remodeling. Also promotes differentiation and proliferation of hematopoietic cells. This is Hepatocyte growth factor receptor (MET) from Dasypus novemcinctus (Nine-banded armadillo).